The primary structure comprises 426 residues: Serine--tRNA ligase (426 aa).

230–232 (TAE) contributes to the L-serine binding site. Position 261–263 (261–263 (RSE)) interacts with ATP. E284 contacts L-serine. 348–351 (EISS) provides a ligand contact to ATP. S384 provides a ligand contact to L-serine.

It belongs to the class-II aminoacyl-tRNA synthetase family. Type-1 seryl-tRNA synthetase subfamily. In terms of assembly, homodimer. The tRNA molecule binds across the dimer.

It is found in the cytoplasm. It catalyses the reaction tRNA(Ser) + L-serine + ATP = L-seryl-tRNA(Ser) + AMP + diphosphate + H(+). It carries out the reaction tRNA(Sec) + L-serine + ATP = L-seryl-tRNA(Sec) + AMP + diphosphate + H(+). It functions in the pathway aminoacyl-tRNA biosynthesis; selenocysteinyl-tRNA(Sec) biosynthesis; L-seryl-tRNA(Sec) from L-serine and tRNA(Sec): step 1/1. Functionally, catalyzes the attachment of serine to tRNA(Ser). Is also able to aminoacylate tRNA(Sec) with serine, to form the misacylated tRNA L-seryl-tRNA(Sec), which will be further converted into selenocysteinyl-tRNA(Sec). This Phenylobacterium zucineum (strain HLK1) protein is Serine--tRNA ligase.